We begin with the raw amino-acid sequence, 62 residues long: uncharacterized protein (62 aa).

This is an uncharacterized protein from Caenorhabditis elegans.